Reading from the N-terminus, the 405-residue chain is MTQSQYRPGPDANGLFGSFGGRYVAETLMPLVLDLAREYEAAKADPKFLEELAYFQRDYIGRPNPLYFAERLTEHCGGAKIFFKREELNHTGAHKVNNCIGQVLLAKRMGKKRLIAETGAGMHGVATATVAARFGLPCVIYMGATDIERQQANVFRMKLLGAEIVPVTAGTGTLKDAMNEALRDWVTNVEDTFYLIGTVAGPHPYPAMVRDFQSIIGKETRAQLQEKEGRLPDSLVACVGGGSNAMGLFHEFLEEPSVQIIGVEAGGHGVHTDKHAASLNGGVPGVLHGNRTYLLQDEDGQITDAHSISAGLDYPGIGPEHAYLHEVKRVEYVSITDDEALDAFHATCRLEGIIPALESSHALAEAIKRAPKLPKDHLMVVCLSGRGDKDMQTVMNHMAAQEKQA.

Residue Lys95 is modified to N6-(pyridoxal phosphate)lysine.

This sequence belongs to the TrpB family. In terms of assembly, tetramer of two alpha and two beta chains. Requires pyridoxal 5'-phosphate as cofactor.

It catalyses the reaction (1S,2R)-1-C-(indol-3-yl)glycerol 3-phosphate + L-serine = D-glyceraldehyde 3-phosphate + L-tryptophan + H2O. It functions in the pathway amino-acid biosynthesis; L-tryptophan biosynthesis; L-tryptophan from chorismate: step 5/5. Functionally, the beta subunit is responsible for the synthesis of L-tryptophan from indole and L-serine. This Pseudomonas putida (Arthrobacter siderocapsulatus) protein is Tryptophan synthase beta chain (trpB).